Consider the following 660-residue polypeptide: Bifunctional polymyxin resistance protein ArnA (660 aa).

Positions 1-304 (MKAVVFAYHD…TLGLVAGARL (304 aa)) are formyltransferase ArnAFT. His-104 serves as the catalytic Proton donor; for formyltransferase activity. (6R)-10-formyltetrahydrofolate contacts are provided by residues Arg-114 and 136 to 140 (VKRAD). Residues 314–660 (RRTRVLILGV…QSVEPGDAEE (347 aa)) form a dehydrogenase ArnADH region. NAD(+)-binding positions include Asp-347 and 368 to 369 (DI). UDP-alpha-D-glucuronate contacts are provided by residues Ala-393, Tyr-398, and 432 to 433 (TS). The Proton acceptor; for decarboxylase activity role is filled by Glu-434. Residues Arg-460, Asn-492, 526 to 535 (KLIDGGRQKR), and Tyr-613 contribute to the UDP-alpha-D-glucuronate site. The active-site Proton donor; for decarboxylase activity is Arg-619.

The protein in the N-terminal section; belongs to the Fmt family. UDP-L-Ara4N formyltransferase subfamily. In the C-terminal section; belongs to the NAD(P)-dependent epimerase/dehydratase family. UDP-glucuronic acid decarboxylase subfamily. In terms of assembly, homohexamer, formed by a dimer of trimers.

The enzyme catalyses UDP-alpha-D-glucuronate + NAD(+) = UDP-beta-L-threo-pentopyranos-4-ulose + CO2 + NADH. The catalysed reaction is UDP-4-amino-4-deoxy-beta-L-arabinose + (6R)-10-formyltetrahydrofolate = UDP-4-deoxy-4-formamido-beta-L-arabinose + (6S)-5,6,7,8-tetrahydrofolate + H(+). It functions in the pathway nucleotide-sugar biosynthesis; UDP-4-deoxy-4-formamido-beta-L-arabinose biosynthesis; UDP-4-deoxy-4-formamido-beta-L-arabinose from UDP-alpha-D-glucuronate: step 1/3. It participates in nucleotide-sugar biosynthesis; UDP-4-deoxy-4-formamido-beta-L-arabinose biosynthesis; UDP-4-deoxy-4-formamido-beta-L-arabinose from UDP-alpha-D-glucuronate: step 3/3. Its pathway is bacterial outer membrane biogenesis; lipopolysaccharide biosynthesis. Its function is as follows. Bifunctional enzyme that catalyzes the oxidative decarboxylation of UDP-glucuronic acid (UDP-GlcUA) to UDP-4-keto-arabinose (UDP-Ara4O) and the addition of a formyl group to UDP-4-amino-4-deoxy-L-arabinose (UDP-L-Ara4N) to form UDP-L-4-formamido-arabinose (UDP-L-Ara4FN). The modified arabinose is attached to lipid A and is required for resistance to polymyxin and cationic antimicrobial peptides. The chain is Bifunctional polymyxin resistance protein ArnA from Erwinia tasmaniensis (strain DSM 17950 / CFBP 7177 / CIP 109463 / NCPPB 4357 / Et1/99).